We begin with the raw amino-acid sequence, 74 residues long: Large ribosomal subunit protein uL30 (74 aa).

It belongs to the universal ribosomal protein uL30 family. Part of the 50S ribosomal subunit.

The chain is Large ribosomal subunit protein uL30 from Micrococcus luteus (strain ATCC 4698 / DSM 20030 / JCM 1464 / CCM 169 / CCUG 5858 / IAM 1056 / NBRC 3333 / NCIMB 9278 / NCTC 2665 / VKM Ac-2230) (Micrococcus lysodeikticus).